Consider the following 499-residue polypeptide: RNA polymerase sigma factor SigA (499 aa).

2 stretches are compositionally biased toward basic residues: residues 1 to 12 (MSSPKKNFKKPQ) and 77 to 87 (KKRRGRKPKHA). 2 disordered regions span residues 1–25 (MSSP…LNEE) and 68–89 (QENK…HAPL). Residues 252-322 (LVTSNLRLVV…TRAIADQART (71 aa)) are sigma-70 factor domain-2. The short motif at 276–279 (DLIQ) is the Interaction with polymerase core subunit RpoC element. Positions 331–412 (ETINRLAKAE…DTDAQMPDEF (82 aa)) are sigma-70 factor domain-3. The segment at 425-480 (LLNNCLSEQEELIVRMRIGMPPYNETKTLDEVSQKIKIPREKIRQIETKAIRKLRQ) is sigma-70 factor domain-4. The H-T-H motif DNA-binding region spans 453–472 (LDEVSQKIKIPREKIRQIET).

Belongs to the sigma-70 factor family. RpoD/SigA subfamily. As to quaternary structure, interacts transiently with the RNA polymerase catalytic core.

The protein localises to the cytoplasm. Sigma factors are initiation factors that promote the attachment of RNA polymerase to specific initiation sites and are then released. This sigma factor is the primary sigma factor during exponential growth. The chain is RNA polymerase sigma factor SigA from Mycoplasma pneumoniae (strain ATCC 29342 / M129 / Subtype 1) (Mycoplasmoides pneumoniae).